The following is an 82-amino-acid chain: Cytochrome b559 subunit alpha (82 aa).

The helical transmembrane segment at 22-36 threads the bilayer; it reads VIHFVTLPSIFLAGF. Heme is bound at residue His-24.

It belongs to the PsbE/PsbF family. As to quaternary structure, heterodimer of an alpha subunit and a beta subunit. PSII is composed of 1 copy each of membrane proteins PsbA, PsbB, PsbC, PsbD, PsbE, PsbF, PsbH, PsbI, PsbJ, PsbK, PsbL, PsbM, PsbT, PsbX, PsbY, PsbZ, Psb30/Ycf12, peripheral proteins PsbO, CyanoQ (PsbQ), PsbU, PsbV and a large number of cofactors. It forms dimeric complexes. Requires heme b as cofactor.

Its subcellular location is the cellular thylakoid membrane. Functionally, this b-type cytochrome is tightly associated with the reaction center of photosystem II (PSII). PSII is a light-driven water:plastoquinone oxidoreductase that uses light energy to abstract electrons from H(2)O, generating O(2) and a proton gradient subsequently used for ATP formation. It consists of a core antenna complex that captures photons, and an electron transfer chain that converts photonic excitation into a charge separation. The chain is Cytochrome b559 subunit alpha from Parasynechococcus marenigrum (strain WH8102).